Here is a 49-residue protein sequence, read N- to C-terminus: Large ribosomal subunit protein bL33 (49 aa).

The protein belongs to the bacterial ribosomal protein bL33 family.

This Lactobacillus acidophilus (strain ATCC 700396 / NCK56 / N2 / NCFM) protein is Large ribosomal subunit protein bL33.